We begin with the raw amino-acid sequence, 243 residues long: tRNA (guanine-N(1)-)-methyltransferase (243 aa).

Residues Gly108 and 127–132 (LGDFVL) each bind S-adenosyl-L-methionine.

It belongs to the RNA methyltransferase TrmD family. As to quaternary structure, homodimer.

It localises to the cytoplasm. The catalysed reaction is guanosine(37) in tRNA + S-adenosyl-L-methionine = N(1)-methylguanosine(37) in tRNA + S-adenosyl-L-homocysteine + H(+). Functionally, specifically methylates guanosine-37 in various tRNAs. This Streptococcus pyogenes serotype M5 (strain Manfredo) protein is tRNA (guanine-N(1)-)-methyltransferase.